Reading from the N-terminus, the 524-residue chain is uncharacterized protein (524 aa).

Residues 13–33 form a helical membrane-spanning segment; sequence EFILLILGMTVVGIVITMGLV.

The protein localises to the membrane. This is an uncharacterized protein from Methanocaldococcus jannaschii (strain ATCC 43067 / DSM 2661 / JAL-1 / JCM 10045 / NBRC 100440) (Methanococcus jannaschii).